A 39-amino-acid chain; its full sequence is Potassium channel toxin alpha-KTx 2.16 (39 aa).

Disulfide bonds link Cys7–Cys29, Cys13–Cys34, and Cys17–Cys36. An Isoleucine amide modification is found at Ile39.

Belongs to the short scorpion toxin superfamily. Potassium channel inhibitor family. Alpha-KTx 02 subfamily. In terms of tissue distribution, expressed by the venom gland.

It localises to the secreted. In terms of biological role, blocks human voltage-gated potassium channels Kv1.2/KCNA2 (IC(50)=0.7 nM), Kv1.3/KCNA3 (IC(50)=26.2 nM) and blocks intermediate conductance calcium-activated potassium channel KCa3.1/KCNN4 (IC(50)=56 nM). In Centruroides tecomanus (Scorpion), this protein is Potassium channel toxin alpha-KTx 2.16.